Consider the following 383-residue polypeptide: ATP phosphoribosyltransferase regulatory subunit (383 aa).

This sequence belongs to the class-II aminoacyl-tRNA synthetase family. HisZ subfamily. In terms of assembly, heteromultimer composed of HisG and HisZ subunits.

It localises to the cytoplasm. Its pathway is amino-acid biosynthesis; L-histidine biosynthesis; L-histidine from 5-phospho-alpha-D-ribose 1-diphosphate: step 1/9. Functionally, required for the first step of histidine biosynthesis. May allow the feedback regulation of ATP phosphoribosyltransferase activity by histidine. The polypeptide is ATP phosphoribosyltransferase regulatory subunit (Cupriavidus pinatubonensis (strain JMP 134 / LMG 1197) (Cupriavidus necator (strain JMP 134))).